Here is a 163-residue protein sequence, read N- to C-terminus: 6,7-dimethyl-8-ribityllumazine synthase (163 aa).

5-amino-6-(D-ribitylamino)uracil-binding positions include Phe-27, 58 to 60 (ALE), and 87 to 89 (CVV). 92–93 (DT) serves as a coordination point for (2S)-2-hydroxy-3-oxobutyl phosphate. His-95 acts as the Proton donor in catalysis. Asn-120 is a binding site for 5-amino-6-(D-ribitylamino)uracil. Arg-134 contributes to the (2S)-2-hydroxy-3-oxobutyl phosphate binding site.

This sequence belongs to the DMRL synthase family.

It carries out the reaction (2S)-2-hydroxy-3-oxobutyl phosphate + 5-amino-6-(D-ribitylamino)uracil = 6,7-dimethyl-8-(1-D-ribityl)lumazine + phosphate + 2 H2O + H(+). It participates in cofactor biosynthesis; riboflavin biosynthesis; riboflavin from 2-hydroxy-3-oxobutyl phosphate and 5-amino-6-(D-ribitylamino)uracil: step 1/2. Catalyzes the formation of 6,7-dimethyl-8-ribityllumazine by condensation of 5-amino-6-(D-ribitylamino)uracil with 3,4-dihydroxy-2-butanone 4-phosphate. This is the penultimate step in the biosynthesis of riboflavin. This Rhodopseudomonas palustris (strain BisA53) protein is 6,7-dimethyl-8-ribityllumazine synthase.